Reading from the N-terminus, the 248-residue chain is 3-deoxy-manno-octulosonate cytidylyltransferase (248 aa).

Belongs to the KdsB family.

It is found in the cytoplasm. The catalysed reaction is 3-deoxy-alpha-D-manno-oct-2-ulosonate + CTP = CMP-3-deoxy-beta-D-manno-octulosonate + diphosphate. The protein operates within nucleotide-sugar biosynthesis; CMP-3-deoxy-D-manno-octulosonate biosynthesis; CMP-3-deoxy-D-manno-octulosonate from 3-deoxy-D-manno-octulosonate and CTP: step 1/1. It functions in the pathway bacterial outer membrane biogenesis; lipopolysaccharide biosynthesis. Functionally, activates KDO (a required 8-carbon sugar) for incorporation into bacterial lipopolysaccharide in Gram-negative bacteria. The protein is 3-deoxy-manno-octulosonate cytidylyltransferase of Escherichia fergusonii (strain ATCC 35469 / DSM 13698 / CCUG 18766 / IAM 14443 / JCM 21226 / LMG 7866 / NBRC 102419 / NCTC 12128 / CDC 0568-73).